Here is a 352-residue protein sequence, read N- to C-terminus: Ion-translocating oxidoreductase complex subunit D (352 aa).

5 helical membrane-spanning segments follow: residues 20–40, 42–62, 78–109, 123–143, and 148–168; these read IMLLVLLAAVPGIAAQLWFFG, GTLVQILLASVSALLAEALVL, ALLTGLLLAVSIPPLAPWWMVVLGTVFAVIIA, PAMIGYVVLLISFPVQMTSWL, and IAVNILGFIDAIQVIFSGHTA. Thr-187 bears the FMN phosphoryl threonine mark. The next 5 membrane-spanning stretches (helical) occupy residues 214–234, 242–262, 267–287, 301–321, and 322–342; these read ILAGAGWQWVNLAWLAGGVWL, WHIPLSFLVTLALCATLGWLF, LAAPQIHLLSGATMLGAFFIL, LIFGALAGLLVWLIRSFGGYP, and DGVAFAVLLANITVPLIDYYT.

Belongs to the NqrB/RnfD family. The complex is composed of six subunits: RsxA, RsxB, RsxC, RsxD, RsxE and RsxG. FMN serves as cofactor.

The protein localises to the cell inner membrane. Part of a membrane-bound complex that couples electron transfer with translocation of ions across the membrane. Required to maintain the reduced state of SoxR. This is Ion-translocating oxidoreductase complex subunit D from Shigella dysenteriae serotype 1 (strain Sd197).